Consider the following 66-residue polypeptide: UPF0337 protein bsl1473 (66 aa).

This sequence belongs to the UPF0337 (CsbD) family.

In Bradyrhizobium diazoefficiens (strain JCM 10833 / BCRC 13528 / IAM 13628 / NBRC 14792 / USDA 110), this protein is UPF0337 protein bsl1473.